We begin with the raw amino-acid sequence, 1772 residues long: MGQELSQHERYVEQLKQALKTRGVKVKYADLLKFFDFVKDTCPWFPQEGTIDIKRWRRVGDCFQDYYNTFGPEKVPVTAFSYWNLIKELIDKKEVNPQVMAAVAQTEEILKTSSHTELTTKPSQNPDLDLISLDSDDEGAKGSSLKDKNLSCTKKPKRFPVLLTAQTSADPEDPNPSEVDWDGLEDEAAKYHNPDWPPFLTRPPPYNKATPSAPTVMAVVNPKEELKEKIAQLEEQIKLEELHQALISKLQKLKTGNETVTSPETAGGFSRTPHWPGQHIPKGKCCASREKEEQTPKDIFPVTETVDGQGQAWRHHNGFDFTVIKELKTAASQYGATAPYTLAIVESVADNWLTPTDWNTLVRAVLSGGDHLLWKSEFFENCRETAKRNQQAGNGWDFDMLTGSGNYSSTDAQMQYDPGLFAQIQAAATKAWRKLPVKGDPGASLTGVKQGPDEPFADFVHRLITTAGRIFGSAEAGVDYVKQLAYENANPACQAAIRPYRKKTDLTGYIRLCSDIGPSYQQGLAMAAAFSGQTVKDFLNNKNKEKGGCCFKCGRKGHFAKNCHEHIHNNSETKAPGLCPRCKRGKHWANECKSKTDSQGNPLPPHQGNRTEGPAPGPETSLWGGQLCSSQQKQPISKLTRATPGSAGLDLSSTSHTVLTPEMGPQALSTGIYGPLPPNTFGLILGRSSITIKGLQVYPGVIDNDYTGEIKIMAKAVNNIVTVPQGNRIAQLILLPLIETDNKVQQPYRGQGSFGSSDIYWVQPITCQKPSLTLWLDDKMFTGLIDTGADVTIIKLEDWPPNWPITDTLTNLRGIGQSNNPKQSSKYLTWRDKENNSGLIKPFVIPNLPVNLWGRDLLSQMKIMMCSPSDIVTAQMLAQGYSPGKGLGKNENGILHPIPNQGQFDKKGFGNFLTAAIDMLAPQQCAEPITWKSDEPVWVDQWPLTSEKLAAAQQLVQEQLEAGHITESNSPWNTPIFVIKKKSGKWRLLQDLRAVNATMVLMGALQPGLPSPVAIPQGYLKIIIDLKDCFFSIPLHPSDQKRFAFSLPSTNFKEPMQRFQWKVLPQRMANSPTLCQKYVATAIHKVRHAWKQMYIIHYMDDILIAGKDGQQVLQCFDQLKQELTIAGLHIAPEKIQLQDPYTYLGFELNGPKITNQKAVIRKDKLQTLNDFQKLLGDINWLRPYLKLTTADLKPLFDTLKGDSNPNSHRSLSKEALALLDKVETAIAEQFVTHINYSLPLMFLIFNTALTPTGLFWQNNPIMWVHLPASPKKVLLPYYDAIADLIILGRDHSKKYFGIEPSVIIQPYSKSQIDWLMQNTEMWPIACASYVGILDNHYPPNKLIQFCKLHAFIFPQIISKTPLNNALLVFTDGSSTGMAAYTLADTTIKFQTNLNSAQLVELQALIAVLSAFPNQPLNIYTDSAYLAHSIPLLETVAQIKHISETAKLFLQCQQLIYNRSIPFYIGHVRAHSGLPGPIAHGNQKADLATKTVASNINTNLESAQNAHTLHHLNAQTLKLMFNIPREQARQIVRQCPICATYLPVPHLGVNPRGLLPNMIWQMDVTHYSEFGNLKYIHVSIDTFSGFLLATLQTGETTKHVITHLLHCFSIIGLPKQIKTDNGPGYTSKNFQEFCSTLQIKHVTGIPYNPQGQGIVERAHLSLKTTIEKIKKGEWYPTKGTPRNILNHALFILNFLNLDDQNHSAADRFWHSNPRKQFAMVKWKDPLDNTWPWPDPVIIWGRGSVCVYSQTHDAARWLPERLVKQIPNNNQSRE.

Gly-2 carries N-myristoyl glycine; by host lipidation. Positions 101 to 162 (AAVAQTEEIL…TKKPKRFPVL (62 aa)) are excised as a propeptide. Residues 113 to 126 (SSHTELTTKPSQNP) are compositionally biased toward polar residues. Residues 113–149 (SSHTELTTKPSQNPDLDLISLDSDDEGAKGSSLKDKN) form a disordered region. Residues 138–149 (EGAKGSSLKDKN) are compositionally biased toward basic and acidic residues. The PPXY motif motif lies at 203-206 (PPPY). The PTAP/PSAP motif motif lies at 211-214 (PSAP). Residues 217 to 258 (MAVVNPKEELKEKIAQLEEQIKLEELHQALISKLQKLKTGNE) are a coiled coil. Residues 258–282 (ETVTSPETAGGFSRTPHWPGQHIPK) are disordered. Residues 548–565 (GCCFKCGRKGHFAKNCHE) form a CCHC-type zinc finger. Residues 593–626 (KSKTDSQGNPLPPHQGNRTEGPAPGPETSLWGGQ) form a disordered region. Residues 781–857 (FTGLIDTGAD…LPVNLWGRDL (77 aa)) enclose the Peptidase A2 domain. Asp-786 (protease; shared with dimeric partner) is an active-site residue. One can recognise a G-patch domain in the interval 868 to 914 (PSDIVTAQMLAQGYSPGKGLGKNENGILHPIPNQGQFDKKGFGNFLT). The 189-residue stretch at 960–1148 (LEAGHITESN…DPYTYLGFEL (189 aa)) folds into the Reverse transcriptase domain. Mg(2+)-binding residues include Asp-1025, Asp-1100, Asp-1101, Asp-1371, Glu-1400, Asp-1421, and Asp-1485. Residues 1362–1493 (LNNALLVFTD…ADLATKTVAS (132 aa)) form the RNase H type-1 domain. Residues 1497–1538 (TNLESAQNAHTLHHLNAQTLKLMFNIPREQARQIVRQCPICA) form an Integrase-type zinc finger. Zn(2+)-binding residues include His-1506, His-1510, Cys-1534, and Cys-1537. One can recognise an Integrase catalytic domain in the interval 1551–1720 (RGLLPNMIWQ…NPRKQFAMVK (170 aa)). Positions 1562, 1619, and 1655 each coordinate Mg(2+). The integrase-type DNA-binding region spans 1717-1766 (AMVKWKDPLDNTWPWPDPVIIWGRGSVCVYSQTHDAARWLPERLVKQIPN).

This sequence belongs to the retroviral Pol polyprotein family. Homodimer. As to quaternary structure, interacts with the G-patch peptide. In terms of assembly, interacts with the reverse transcriptase/ribonuclease H. Homotrimer. It depends on Mg(2+) as a cofactor. Post-translationally, released by autocatalytic processing. The protease can undergo further autoprocessing to yield 2 shorter but enzymatically active forms of 12 kDa and 13 kDa. In terms of processing, myristoylated. Myristoylation of the matrix (MA) domain mediates the transport and binding of Gag polyproteins to the host plasma membrane and is required for the assembly of viral particles. Specific enzymatic cleavages in vivo yield mature proteins.

The protein resides in the virion. The enzyme catalyses DNA(n) + a 2'-deoxyribonucleoside 5'-triphosphate = DNA(n+1) + diphosphate. It catalyses the reaction Endonucleolytic cleavage to 5'-phosphomonoester.. The catalysed reaction is dUTP + H2O = dUMP + diphosphate + H(+). Matrix protein. Functionally, nucleocapsid protein p14: Nucleocapsid protein. Its function is as follows. Capsid protein. In terms of biological role, the aspartyl protease mediates proteolytic cleavages of Gag and Gag-Pol polyproteins during or shortly after the release of the virion from the plasma membrane. Cleavages take place as an ordered, step-wise cascade to yield mature proteins. This process is called maturation. Displays maximal activity during the budding process just prior to particle release from the cell. Enhances the activity of the reverse transcriptase. May be part of the mature RT. Functionally, RT is a multifunctional enzyme that converts the viral dimeric RNA genome into dsDNA in the cytoplasm, shortly after virus entry into the cell. This enzyme displays a DNA polymerase activity that can copy either DNA or RNA templates, and a ribonuclease H (RNase H) activity that cleaves the RNA strand of RNA-DNA heteroduplexes in a partially processive 3' to 5' endonucleasic mode. Conversion of viral genomic RNA into dsDNA requires many steps. A tRNA binds to the primer-binding site (PBS) situated at the 5' end of the viral RNA. RT uses the 3' end of the tRNA primer to perfom a short round of RNA-dependent minus-strand DNA synthesis. The reading proceeds through the U5 region and ends after the repeated (R) region which is present at both ends of viral RNA. The portion of the RNA-DNA heteroduplex is digested by the RNase H, resulting in a ssDNA product attached to the tRNA primer. This ssDNA/tRNA hybridizes with the identical R region situated at the 3' end of viral RNA. This template exchange, known as minus-strand DNA strong stop transfer, can be either intra- or intermolecular. RT uses the 3' end of this newly synthesized short ssDNA to perfom the RNA-dependent minus-strand DNA synthesis of the whole template. RNase H digests the RNA template except for a polypurine tract (PPT) situated at the 5' end of the genome. It is not clear if both polymerase and RNase H activities are simultaneous. RNase H probably can proceed both in a polymerase-dependent (RNA cut into small fragments by the same RT performing DNA synthesis) and a polymerase-independent mode (cleavage of remaining RNA fragments by free RTs). Secondly, RT performs DNA-directed plus-strand DNA synthesis using the PPT that has not been removed by RNase H as primers. PPT and tRNA primers are then removed by RNase H. The 3' and 5' ssDNA PBS regions hybridize to form a circular dsDNA intermediate. Strand displacement synthesis by RT to the PBS and PPT ends produces a blunt ended, linear dsDNA copy of the viral genome that includes long terminal repeats (LTRs) at both ends. Its function is as follows. Catalyzes viral DNA integration into the host chromosome, by performing a series of DNA cutting and joining reactions. This Macaca mulatta (Rhesus macaque) protein is Gag-Pro-Pol polyprotein (pol).